The following is a 318-amino-acid chain: 2-keto-3-deoxygluconate permease (318 aa).

The next 10 membrane-spanning stretches (helical) occupy residues 10-30 (IPGG…TFTP), 42-62 (GLIT…GASI), 76-96 (VLVV…GAFL), 105-125 (LLAG…NGGL), 139-159 (AGAF…VILG), 162-182 (GIAT…LIGF), 199-219 (VQTL…LSVI), 224-244 (FAGI…LILA), 254-274 (TAGI…LLIA), and 289-309 (ALVA…TALW).

This sequence belongs to the KdgT transporter family.

Its subcellular location is the cell inner membrane. The enzyme catalyses 2-dehydro-3-deoxy-D-gluconate(in) + H(+)(in) = 2-dehydro-3-deoxy-D-gluconate(out) + H(+)(out). Catalyzes the proton-dependent uptake of 2-keto-3-deoxygluconate (KDG) into the cell. The polypeptide is 2-keto-3-deoxygluconate permease (Pectobacterium atrosepticum (strain SCRI 1043 / ATCC BAA-672) (Erwinia carotovora subsp. atroseptica)).